The following is a 102-amino-acid chain: MFIKTGDKVRVIAGKDKGKEGTIKKVLASQNRVIVEGVNIVKKHQKPSNSNPNGGVIDTEAAINASNVMLIDPSTNEPTRVGYKFVDGKKVRVAKKSGKTLD.

It belongs to the universal ribosomal protein uL24 family. As to quaternary structure, part of the 50S ribosomal subunit.

In terms of biological role, one of two assembly initiator proteins, it binds directly to the 5'-end of the 23S rRNA, where it nucleates assembly of the 50S subunit. Its function is as follows. One of the proteins that surrounds the polypeptide exit tunnel on the outside of the subunit. This is Large ribosomal subunit protein uL24 from Limosilactobacillus reuteri (strain DSM 20016) (Lactobacillus reuteri).